The primary structure comprises 185 residues: Putative manganese efflux pump MntP (185 aa).

Helical transmembrane passes span 4 to 24 (LLLS…SVSL), 43 to 63 (IFFG…GVPI), 67 to 87 (IDPF…GKMI), 107 to 127 (LLLA…FALI), 131 to 151 (VLLP…FGVL), and 165 to 185 (QILG…EYCL).

The protein belongs to the MntP (TC 9.B.29) family.

It localises to the cell membrane. In terms of biological role, probably functions as a manganese efflux pump. In Methanocorpusculum labreanum (strain ATCC 43576 / DSM 4855 / Z), this protein is Putative manganese efflux pump MntP.